The sequence spans 281 residues: Bifunctional protein FolD (281 aa).

Residues 164 to 166 (GRS), S189, and T230 each bind NADP(+).

It belongs to the tetrahydrofolate dehydrogenase/cyclohydrolase family. As to quaternary structure, homodimer.

It carries out the reaction (6R)-5,10-methylene-5,6,7,8-tetrahydrofolate + NADP(+) = (6R)-5,10-methenyltetrahydrofolate + NADPH. It catalyses the reaction (6R)-5,10-methenyltetrahydrofolate + H2O = (6R)-10-formyltetrahydrofolate + H(+). Its pathway is one-carbon metabolism; tetrahydrofolate interconversion. In terms of biological role, catalyzes the oxidation of 5,10-methylenetetrahydrofolate to 5,10-methenyltetrahydrofolate and then the hydrolysis of 5,10-methenyltetrahydrofolate to 10-formyltetrahydrofolate. This chain is Bifunctional protein FolD, found in Dictyoglomus turgidum (strain DSM 6724 / Z-1310).